The sequence spans 1088 residues: MGTSQAFLVLSCLLTGPSLIVCQLLLPSILPNENEKIVPLSSSFSLRCFGESEVSWQHPMSEEEDPNVEIRTEENNSSLFVTVLEVVNASAAHTGWYTCYYNHTQTEESEIEGRHIYIYVPDPDMAFVPLGMTDSLVIVEEDDSAIIPCLTTDPDTEVTLHNNGRLVPASYDSRQGFNGTFSVGPYICEATVRGRTFKTSEFNVYALKATSELNLEMDTRQTVYKAGETIVVTCAVFNNEVVDLQWTYPGEVRNKGITMLEEIKLPSIKLVYTLTVPKATVKDSGDYECAARQATKEVKEMKTVTISVHEKGFVQIRPTFGHLETVNLHQVREFVVEVQAYPTPRISWLKDNLTLIENLTEITTDVQRSQETRYQSKLKLIRAKEEDSGHYTIIVQNDDDMKSYTFELSTLVPASILELVDDHHGSGGGQTVRCTAEGTPLPNIEWMICKDIKKCNNDTSWTVLASNVSNIITEFHQRGRSTVEGRVSFAKVEETIAVRCLAKNDLGIGNRELKLVAPSLRSELTVAAAVLVLLVIVIVSLIVLVVIWKQKPRYEIRWRVIESISPDGHEYIYVDPMQLPYDSRWEFPRDGLVLGRILGSGAFGKVVEGTAYGLSRSQPVMKVAVKMLKPTARSSEKQALMSELKIMTHLGPHLNIVNLLGACTKSGPIYIITEYCFYGDLVNYLHKNRDSFMSRHPEKPKKDLDIFGLNPADESTRSYVILSFENNGDYVDMKQADTTQYVPMLERKEVSKYSDIQRSLYDRPASYKKKSMLDSEAKNLLSDDDSEGLTLLDLLSFTYQVARGMEFLASKNCVHRDLAARNVLLAQGKIVKICDFGLARDIMHDSNYVSKGSTFLPVKWMAPESIFDNLYTTLSDVWSYGVLLWEIFSLGGTPYPGMMVDSTFYNKIKSGYRMAKPDHATSEVYEIMVQCWNSEPEKRPSFYHLSEIVENLLPGQYKKSYEKIHLDFLKSDHPAVARMRVDSDNAYIGVTYKNEEDKLKEWEGGLDEQRLSADSGYIIPLPDIDPVPEEEDLGKRNRHSSQTSEESAIETGSSSSTFIKREDETIEDIDMMDDIGIDSSDLVEDSFL.

The first 23 residues, M1–Q23, serve as a signal peptide directing secretion. Ig-like C2-type domains follow at residues L24–E112, I116–S200, E201–T305, P318–S409, and P413–V516. Residues L24–A527 are Extracellular-facing. An intrachain disulfide couples C48 to C99. N-linked (GlcNAc...) asparagine glycans are attached at residues N75, N102, and N178. 2 disulfide bridges follow: C149–C188 and C234–C289. N-linked (GlcNAc...) asparagine glycosylation is found at N352, N358, N457, and N467. C434 and C500 are oxidised to a cystine. The chain crosses the membrane as a helical span at residues A528–W548. Topologically, residues K549–L1088 are cytoplasmic. Y571 and Y573 each carry phosphotyrosine; by autocatalysis. The 362-residue stretch at L592–L953 folds into the Protein kinase domain. ATP is bound by residues L598–V606 and K626. Phosphotyrosine; by autocatalysis is present on residues Y719, Y730, Y741, Y753, Y761, and Y767. Residue D817 is the Proton acceptor of the active site. Phosphotyrosine; by autocatalysis is present on residues Y848, Y987, and Y1017. The segment at Y1017 to L1088 is disordered. Residues S1040–F1058 are compositionally biased toward polar residues. Positions E1064 to L1088 are enriched in acidic residues.

Belongs to the protein kinase superfamily. Tyr protein kinase family. CSF-1/PDGF receptor subfamily. As to quaternary structure, interacts with homodimeric PDGFA, PDGFB and PDGFC, and with heterodimers formed by PDGFA and PDGFB. Monomer in the absence of bound ligand. Interaction with dimeric PDGFA, PDGFB and/or PDGFC leads to receptor dimerization, where both PDGFRA homodimers and heterodimers with PDGFRB are observed. Interacts (tyrosine phosphorylated) with SHB (via SH2 domain). Interacts (tyrosine phosphorylated) with SHF (via SH2 domain). Interacts (tyrosine phosphorylated) with SRC (via SH2 domain). Interacts (tyrosine phosphorylated) with PIK3R1. Interacts (tyrosine phosphorylated) with PLCG1 (via SH2 domain). Interacts (tyrosine phosphorylated) with CRK, GRB2 and GRB7. Interacts with CD248; this interaction promotes PDGF receptor signaling pathway. Post-translationally, ubiquitinated, leading to its internalization and degradation. In terms of processing, autophosphorylated on tyrosine residues upon ligand binding. Autophosphorylation occurs in trans, i.e. one subunit of the dimeric receptor phosphorylates tyrosine residues on the other subunit. Phosphorylation at Tyr-730 and Tyr-741 is important for interaction with PIK3R1. Phosphorylation at Tyr-719 and Tyr-753 is important for interaction with PTPN11. Phosphorylation at Tyr-761 is important for interaction with CRK. Phosphorylation at Tyr-571 and Tyr-573 is important for interaction with SRC and SRC family members. Phosphorylation at Tyr-987 and Tyr-1017 is important for interaction with PLCG1.

Its subcellular location is the cell membrane. It localises to the cell projection. The protein resides in the cilium. The protein localises to the golgi apparatus. It catalyses the reaction L-tyrosyl-[protein] + ATP = O-phospho-L-tyrosyl-[protein] + ADP + H(+). Its activity is regulated as follows. Present in an inactive conformation in the absence of bound ligand. Binding of PDGFA and/or PDGFB leads to dimerization and activation by autophosphorylation on tyrosine residues. Inhibited by imatinib, nilotinib and sorafenib. Its function is as follows. Tyrosine-protein kinase that acts as a cell-surface receptor for PDGFA, PDGFB and PDGFC and plays an essential role in the regulation of embryonic development, cell proliferation, survival and chemotaxis. Depending on the context, promotes or inhibits cell proliferation and cell migration. Plays an important role in the differentiation of bone marrow-derived mesenchymal stem cells. Required for normal skeleton development and cephalic closure during embryonic development. Required for normal development of the mucosa lining the gastrointestinal tract, and for recruitment of mesenchymal cells and normal development of intestinal villi. Plays a role in cell migration and chemotaxis in wound healing. Plays a role in platelet activation, secretion of agonists from platelet granules, and in thrombin-induced platelet aggregation. Binding of its cognate ligands - homodimeric PDGFA, homodimeric PDGFB, heterodimers formed by PDGFA and PDGFB or homodimeric PDGFC -leads to the activation of several signaling cascades; the response depends on the nature of the bound ligand and is modulated by the formation of heterodimers between PDGFRA and PDGFRB. Phosphorylates PIK3R1, PLCG1, and PTPN11. Activation of PLCG1 leads to the production of the cellular signaling molecules diacylglycerol and inositol 1,4,5-trisphosphate, mobilization of cytosolic Ca(2+) and the activation of protein kinase C. Phosphorylates PIK3R1, the regulatory subunit of phosphatidylinositol 3-kinase, and thereby mediates activation of the AKT1 signaling pathway. Mediates activation of HRAS and of the MAP kinases MAPK1/ERK2 and/or MAPK3/ERK1. Promotes activation of STAT family members STAT1, STAT3 and STAT5A and/or STAT5B. Receptor signaling is down-regulated by protein phosphatases that dephosphorylate the receptor and its down-stream effectors, and by rapid internalization of the activated receptor. This chain is Platelet-derived growth factor receptor alpha (Pdgfra), found in Rattus norvegicus (Rat).